A 193-amino-acid polypeptide reads, in one-letter code: Naphthalene 1,2-dioxygenase system, small oxygenase component (193 aa).

Belongs to the bacterial ring-hydroxylating dioxygenase beta subunit family. In terms of assembly, the naphthalene dioxygenase (NDO) multicomponent enzyme system is composed of an electron transfer component and a dioxygenase component (iron sulfur protein (ISP)). The electron transfer component is composed of a ferredoxin reductase (NdoR) and a ferredoxin (NdoA), and the dioxygenase component is formed of a heterohexamer (trimer of heterodimers) of three large alpha subunits (NdoB) and three small beta subunits (NdoC).

It functions in the pathway aromatic compound metabolism; naphthalene degradation. In terms of biological role, component of the naphthalene dioxygenase (NDO) multicomponent enzyme system which catalyzes the incorporation of both atoms of molecular oxygen into naphthalene to form cis-(1R,2S)-dihydroxy-1,2-dihydronaphthalene. The beta subunit seems to have a structural role in the holoenzyme. The chain is Naphthalene 1,2-dioxygenase system, small oxygenase component from Pseudomonas aeruginosa.